A 2080-amino-acid chain; its full sequence is MLRVFILYAENVHTPDTDISDAYCSAVFAGVKKRTKVIKNSVNPVWNEGFEWDLKGIPLDQGSELHVVVKDHETMGRNRFLGEAKVPLREVLATPSLSASFNAPLLDTKKQPTGASLVLQVSYTPLPGAVPLFPPPTPLEPSPTLPDLDVVADTGGEEDTEDQGLTGDEAEPFLDQSGGPGAPTTPRKLPSRPPPHYPGIKRKRSAPTSRKLLSDKPQDFQIRVQVIEGRQLPGVNIKPVVKVTAAGQTKRTRIHKGNSPLFNETLFFNLFDSPGELFDEPIFITVVDSRSLRTDALLGEFRMDVGTIYREPRHAYLRKWLLLSDPDDFSAGARGYLKTSLCVLGPGDEAPLERKDPSEDKEDIESNLLRPTGVALRGAHFCLKVFRAEDLPQMDDAVMDNVKQIFGFESNKKNLVDPFVEVSFAGKMLCSKILEKTANPQWNQNITLPAMFPSMCEKMRIRIIDWDRLTHNDIVATTYLSMSKISAPGGEIEEEPAGAVKPSKASDLDDYLGFLPTFGPCYINLYGSPREFTGFPDPYTELNTGKGEGVAYRGRLLLSLETKLVEHSEQKVEDLPADDILRVEKYLRRRKYSLFAAFYSATMLQDVDDAIQFEVSIGNYGNKFDMTCLPLASTTQYSRAVFDGCHYYYLPWGNVKPVVVLSSYWEDISHRIETQNQLLGIADRLEAGLEQVHLALKAQCSTEDVDSLVAQLTDELIAGCSQPLGDIHETPSATHLDQYLYQLRTHHLSQITEAALALKLGHSELPAALEQAEDWLLRLRALAEEPQNSLPDIVIWMLQGDKRVAYQRVPAHQVLFSRRGANYCGKNCGKLQTIFLKYPMEKVPGARMPVQIRVKLWFGLSVDEKEFNQFAEGKLSVFAETYENETKLALVGNWGTTGLTYPKFSDVTGKIKLPKDSFRPSAGWTWAGDWFVCPEKTLLHDMDAGHLSFVEEVFENQTRLPGGQWIYMSDNYTDVNGEKVLPKDDIECPLGWKWEDEEWSTDLNRAVDEQGWEYSITIPPERKPKHWVPAEKMYYTHRRRRWVRLRRRDLSQMEALKRHRQAEAEGEGWEYASLFGWKFHLEYRKTDAFRRRRWRRRMEPLEKTGPAAVFALEGALGGVMDDKSEDSMSVSTLSFGVNRPTISCIFDYGNRYHLRCYMYQARDLAAMDKDSFSDPYAIVSFLHQSQKTVVVKNTLNPTWDQTLIFYEIEIFGEPATVAEQPPSIVVELYDHDTYGADEFMGRCICQPSLERMPRLAWFPLTRGSQPSGELLASFELIQREKPAIHHIPGFEVQETSRILDESEDTDLPYPPPQREANIYMVPQNIKPALQRTAIEILAWGLRNMKSYQLANISSPSLVVECGGQTVQSCVIRNLRKNPNFDICTLFMEVMLPREELYCPPITVKVIDNRQFGRRPVVGQCTIRSLESFLCDPYSAESPSPQGGPDDVSLLSPGEDVLIDIDDKEPLIPIQEEEFIDWWSKFFASIGEREKCGSYLEKDFDTLKVYDTQLENVEAFEGLSDFCNTFKLYRGKTQEETEDPSVIGEFKGLFKIYPLPEDPAIPMPPRQFHQLAAQGPQECLVRIYIVRAFGLQPKDPNGKCDPYIKISIGKKSVSDQDNYIPCTLEPVFGKMFELTCTLPLEKDLKITLYDYDLLSKDEKIGETVVDLENRLLSKFGARCGLPQTYCVSGPNQWRDQLRPSQLLHLFCQQHRVKAPVYRTDRVMFQDKEYSIEEIEAGRIPNPHLGPVEERLALHVLQQQGLVPEHVESRPLYSPLQPDIEQGKLQMWVDLFPKALGRPGPPFNITPRRARRFFLRCIIWNTRDVILDDLSLTGEKMSDIYVKGWMIGFEEHKQKTDVHYRSLGGEGNFNWRFIFPFDYLPAEQVCTIAKKDAFWRLDKTESKIPARVVFQIWDNDKFSFDDFLGSLQLDLNRMPKPAKTAKKCSLDQLDDAFHPEWFVSLFEQKTVKGWWPCVAEEGEKKILAGKLEMTLEIVAESEHEERPAGQGRDEPNMNPKLEDPRRPDTSFLWFTSPYKTMKFILWRRFRWAIILFIILFILLLFLAIFIYAFPNYAAMKLVKPFS.

A C2 1 domain is found at 1-101; it reads MLRVFILYAE…LATPSLSASF (101 aa). Over 1 to 2046 the chain is Cytoplasmic; that stretch reads MLRVFILYAE…FILWRRFRWA (2046 aa). Residues Asp-18, Ile-19, Asp-21, and Asn-40 each contribute to the Ca(2+) site. The span at 132 to 144 shows a compositional bias: pro residues; it reads LFPPPTPLEPSPT. The interval 132 to 215 is disordered; sequence LFPPPTPLEP…APTSRKLLSD (84 aa). A compositionally biased stretch (acidic residues) spans 155-172; sequence GGEEDTEDQGLTGDEAEP. Thr-166 carries the phosphothreonine modification. Phosphoserine is present on residues Thr-166 and Gly-167. Phosphothreonine occurs at positions 197 and 198. C2 domains follow at residues 203 to 321, 360 to 496, 1136 to 1262, 1310 to 1438, 1561 to 1679, and 1795 to 1943; these read KRSA…RKWL, DKED…EEEP, GVNR…PLTR, PPPQ…AESP, PMPP…ARCG, and GRPG…KKCS. Ca(2+)-binding residues include Asp-1168, Asp-1174, Asp-1230, and Asp-1232. Residues Asp-1594, Asp-1600, Asp-1649, Asp-1651, Asp-1914, Ser-1917, and Asp-1920 each coordinate Ca(2+). The interval 1995–2017 is disordered; it reads SEHEERPAGQGRDEPNMNPKLED. Residues 2047–2067 form a helical membrane-spanning segment; it reads IILFIILFILLLFLAIFIYAF. The Extracellular segment spans residues 2068-2080; that stretch reads PNYAAMKLVKPFS.

This sequence belongs to the ferlin family. Interacts with CACNA1S. Interacts with ANXA1; the interaction is Ca(2+)- and injury state-dependent. Interacts with ANXA2; the interaction is Ca(2+)- and injury state-dependent. Interacts with CACNA1S and PARVB. Interacts with TRIM72/MG53; interaction is required for transport to sites of cell injury during repair patch formation. Interacts with RIPOR2; this interaction occurs during early myogenic differentiation. Interacts with CAV3 and PARVB. Interacts with AHNAK; the interaction is direct and Ca(2+)-independent. Interacts with AHNAK2; the interaction is direct and Ca(2+)-independent. Ca(2+) serves as cofactor. In terms of tissue distribution, expressed in skeletal muscle, myoblast, myotube and in the syncytiotrophoblast (STB) of the placenta (at protein level). Ubiquitous. Highly expressed in skeletal muscle. Also found in heart, brain, spleen, intestine, placenta and at lower levels in liver, lung, kidney and pancreas.

The protein resides in the cell membrane. The protein localises to the sarcolemma. It is found in the cytoplasmic vesicle membrane. Its function is as follows. Key calcium ion sensor involved in the Ca(2+)-triggered synaptic vesicle-plasma membrane fusion. Plays a role in the sarcolemma repair mechanism of both skeletal muscle and cardiomyocytes that permits rapid resealing of membranes disrupted by mechanical stress. The chain is Dysferlin (DYSF) from Homo sapiens (Human).